A 321-amino-acid chain; its full sequence is 1D-myo-inositol 2-acetamido-2-deoxy-alpha-D-glucopyranoside deacetylase (321 aa).

Positions 15, 18, and 150 each coordinate Zn(2+). The segment at 280 to 321 is disordered; that stretch reads PEGERESDLFAGLPPATDGTGAAGAPSATGAANPADAEGGAA. The span at 290–321 shows a compositional bias: low complexity; the sequence is AGLPPATDGTGAAGAPSATGAANPADAEGGAA.

It belongs to the MshB deacetylase family. The cofactor is Zn(2+).

The catalysed reaction is 1D-myo-inositol 2-acetamido-2-deoxy-alpha-D-glucopyranoside + H2O = 1D-myo-inositol 2-amino-2-deoxy-alpha-D-glucopyranoside + acetate. Catalyzes the deacetylation of 1D-myo-inositol 2-acetamido-2-deoxy-alpha-D-glucopyranoside (GlcNAc-Ins) in the mycothiol biosynthesis pathway. This is 1D-myo-inositol 2-acetamido-2-deoxy-alpha-D-glucopyranoside deacetylase from Streptomyces griseus subsp. griseus (strain JCM 4626 / CBS 651.72 / NBRC 13350 / KCC S-0626 / ISP 5235).